A 432-amino-acid chain; its full sequence is Alpha-enolase (432 aa).

Residue S40 participates in Mg(2+) binding. Substrate is bound by residues H158 and E167. Catalysis depends on E210, which acts as the Proton donor. D245, E293, and D318 together coordinate Mg(2+). Substrate-binding residues include E293 and D318. K343 serves as the catalytic Proton acceptor. Residues 370-373 and K394 each bind substrate; that span reads SHRS.

It belongs to the enolase family. As to quaternary structure, dimer. It depends on Mg(2+) as a cofactor.

It localises to the cytoplasm. The enzyme catalyses (2R)-2-phosphoglycerate = phosphoenolpyruvate + H2O. It participates in carbohydrate degradation; glycolysis; pyruvate from D-glyceraldehyde 3-phosphate: step 4/5. Multifunctional enzyme that, as well as its role in glycolysis, plays a part in various processes such as growth control, hypoxia tolerance and allergic responses. The polypeptide is Alpha-enolase (Thunnus albacares (Yellowfin tuna)).